The following is a 648-amino-acid chain: DNA gyrase subunit B (648 aa).

The region spanning 432 to 546 (RELFIVEGNS…YGFVYLAQPP (115 aa)) is the Toprim domain. 3 residues coordinate Mg(2+): Glu-438, Asp-511, and Asp-513.

The protein belongs to the type II topoisomerase GyrB family. In terms of assembly, heterotetramer, composed of two GyrA and two GyrB chains. In the heterotetramer, GyrA contains the active site tyrosine that forms a transient covalent intermediate with DNA, while GyrB binds cofactors and catalyzes ATP hydrolysis. It depends on Mg(2+) as a cofactor. Mn(2+) is required as a cofactor. The cofactor is Ca(2+).

The protein resides in the cytoplasm. The catalysed reaction is ATP-dependent breakage, passage and rejoining of double-stranded DNA.. A type II topoisomerase that negatively supercoils closed circular double-stranded (ds) DNA in an ATP-dependent manner to modulate DNA topology and maintain chromosomes in an underwound state. Negative supercoiling favors strand separation, and DNA replication, transcription, recombination and repair, all of which involve strand separation. Also able to catalyze the interconversion of other topological isomers of dsDNA rings, including catenanes and knotted rings. Type II topoisomerases break and join 2 DNA strands simultaneously in an ATP-dependent manner. The chain is DNA gyrase subunit B from Metamycoplasma hominis (strain ATCC 23114 / DSM 25592 / NBRC 14850 / NCTC 10111 / PG21) (Mycoplasma hominis).